Reading from the N-terminus, the 427-residue chain is Glutamate-1-semialdehyde 2,1-aminomutase (427 aa).

K265 carries the post-translational modification N6-(pyridoxal phosphate)lysine.

This sequence belongs to the class-III pyridoxal-phosphate-dependent aminotransferase family. HemL subfamily. In terms of assembly, homodimer. Requires pyridoxal 5'-phosphate as cofactor.

It is found in the cytoplasm. The catalysed reaction is (S)-4-amino-5-oxopentanoate = 5-aminolevulinate. The protein operates within porphyrin-containing compound metabolism; protoporphyrin-IX biosynthesis; 5-aminolevulinate from L-glutamyl-tRNA(Glu): step 2/2. This Burkholderia orbicola (strain MC0-3) protein is Glutamate-1-semialdehyde 2,1-aminomutase.